A 220-amino-acid chain; its full sequence is MKDIDTLISNNALWSKMLVEEDPGFFEKLAQAQKPRFLWIGCSDSRVPAERLTGLEPGELFVHRNVANLVIHTDLNCLSVVQYAVDVLEVEHIIICGHYGCGGVQAAVENPELGLINNWLLHIRDIWFKHSSLLGEMPQERRLDTLCELNVMEQVYNLGHSTIMQSAWKRGQKVTIHGWAYGIHDGLLRDLDVTATNRETLEQRYRHGISNLKLKHANHK.

Zn(2+) contacts are provided by C42, D44, H98, and C101.

Belongs to the beta-class carbonic anhydrase family. Homodimer. It depends on Zn(2+) as a cofactor.

It carries out the reaction hydrogencarbonate + H(+) = CO2 + H2O. The chain is Carbonic anhydrase 2 (can) from Escherichia coli (strain K12).